Consider the following 493-residue polypeptide: N-acetylglucosamine kinase 1 (493 aa).

Residues 27–490 form the Hexokinase domain; that stretch reads ESSVLSSIVE…SIIGAAIGAA (464 aa). The interval 79-221 is hexokinase small subdomain; the sequence is TGDEHGQYLV…GLTLDVQSIL (143 aa). The segment at 222–479 is hexokinase large subdomain; it reads NDSLAVYSAG…IKVDLKLIEN (258 aa).

Belongs to the hexokinase family. In terms of assembly, interacts with histone deacetylase SIR2 under filamentation-inducing conditions.

The protein resides in the cytoplasm. It localises to the nucleus. Its subcellular location is the mitochondrion. The catalysed reaction is N-acetyl-D-glucosamine + ATP = N-acetyl-D-glucosamine 6-phosphate + ADP + H(+). It catalyses the reaction D-mannose + ATP = D-mannose 6-phosphate + ADP + H(+). The enzyme catalyses D-glucose + ATP = D-glucose 6-phosphate + ADP + H(+). It carries out the reaction D-glucosamine + ATP = D-glucosamine 6-phosphate + ADP + H(+). It participates in carbohydrate metabolism; hexose metabolism. The protein operates within carbohydrate degradation; glycolysis; D-glyceraldehyde 3-phosphate and glycerone phosphate from D-glucose: step 1/4. Functionally, component of the N-acetylglucosamine catabolic cascade that phosphorylates N-acetylglucosamine (GlcNAc), and allows the unique ability to utilise GlcNAc as carbon source. Converts GlcNAc to GlcNAc-6-P. Also able to phosphorylate glucose, glucosamine (GlcN), and mannose. Galactose, fructose, N-acetylmannosamine (ManNAc), mannosamine (ManN), galactosamine (GalN), and N-acetylgalactosamine (GalNAc) are not phosphorylated by HXK1. GlcNAc metabolism is closely associated with virulence and morphogenesis, and is involved in the cell wall synthesis. Acts both as a repressor and an activator of genes involved in maintaining cellular homeostasis. Contributes to white-opaque morphological transition and plays a role as a filamentation repressor. The sequence is that of N-acetylglucosamine kinase 1 from Candida albicans (strain SC5314 / ATCC MYA-2876) (Yeast).